The primary structure comprises 507 residues: Histidine ammonia-lyase (507 aa).

A cross-link (5-imidazolinone (Ala-Gly)) is located at residues 143 to 145 (ASG). Serine 144 carries the post-translational modification 2,3-didehydroalanine (Ser).

The protein belongs to the PAL/histidase family. In terms of processing, contains an active site 4-methylidene-imidazol-5-one (MIO), which is formed autocatalytically by cyclization and dehydration of residues Ala-Ser-Gly.

It localises to the cytoplasm. The enzyme catalyses L-histidine = trans-urocanate + NH4(+). Its pathway is amino-acid degradation; L-histidine degradation into L-glutamate; N-formimidoyl-L-glutamate from L-histidine: step 1/3. In Alkaliphilus oremlandii (strain OhILAs) (Clostridium oremlandii (strain OhILAs)), this protein is Histidine ammonia-lyase.